We begin with the raw amino-acid sequence, 833 residues long: Glycerol-3-phosphate acyltransferase (833 aa).

Positions 309-314 (CHRSHI) match the HXXXXD motif motif.

The protein belongs to the GPAT/DAPAT family.

The protein localises to the cell inner membrane. The enzyme catalyses sn-glycerol 3-phosphate + an acyl-CoA = a 1-acyl-sn-glycero-3-phosphate + CoA. The protein operates within phospholipid metabolism; CDP-diacylglycerol biosynthesis; CDP-diacylglycerol from sn-glycerol 3-phosphate: step 1/3. This chain is Glycerol-3-phosphate acyltransferase, found in Pseudomonas savastanoi pv. phaseolicola (strain 1448A / Race 6) (Pseudomonas syringae pv. phaseolicola (strain 1448A / Race 6)).